The following is a 279-amino-acid chain: ATP synthase subunit delta (279 aa).

It belongs to the ATPase delta chain family. F-type ATPases have 2 components, F(1) - the catalytic core - and F(0) - the membrane proton channel. F(1) has five subunits: alpha(3), beta(3), gamma(1), delta(1), epsilon(1). F(0) has three main subunits: a(1), b(2) and c(10-14). The alpha and beta chains form an alternating ring which encloses part of the gamma chain. F(1) is attached to F(0) by a central stalk formed by the gamma and epsilon chains, while a peripheral stalk is formed by the delta and b chains.

Its subcellular location is the cell membrane. Its function is as follows. F(1)F(0) ATP synthase produces ATP from ADP in the presence of a proton or sodium gradient. F-type ATPases consist of two structural domains, F(1) containing the extramembraneous catalytic core and F(0) containing the membrane proton channel, linked together by a central stalk and a peripheral stalk. During catalysis, ATP synthesis in the catalytic domain of F(1) is coupled via a rotary mechanism of the central stalk subunits to proton translocation. In terms of biological role, this protein is part of the stalk that links CF(0) to CF(1). It either transmits conformational changes from CF(0) to CF(1) or is implicated in proton conduction. The sequence is that of ATP synthase subunit delta from Parafrankia sp. (strain EAN1pec).